Reading from the N-terminus, the 299-residue chain is 4-diphosphocytidyl-2-C-methyl-D-erythritol kinase (299 aa).

K11 is a catalytic residue. Residue 94–104 participates in ATP binding; sequence PQGGGLGGGSS. D136 is a catalytic residue.

This sequence belongs to the GHMP kinase family. IspE subfamily.

The enzyme catalyses 4-CDP-2-C-methyl-D-erythritol + ATP = 4-CDP-2-C-methyl-D-erythritol 2-phosphate + ADP + H(+). It participates in isoprenoid biosynthesis; isopentenyl diphosphate biosynthesis via DXP pathway; isopentenyl diphosphate from 1-deoxy-D-xylulose 5-phosphate: step 3/6. Its function is as follows. Catalyzes the phosphorylation of the position 2 hydroxy group of 4-diphosphocytidyl-2C-methyl-D-erythritol. In Bordetella pertussis (strain Tohama I / ATCC BAA-589 / NCTC 13251), this protein is 4-diphosphocytidyl-2-C-methyl-D-erythritol kinase.